Reading from the N-terminus, the 486-residue chain is MLNASLRQLSLLLSEKKISSTELTSEFLSRIKALNPDLNAFITIDEEKSLDQANVADKMIAAGRSTPLTGIPIAQKDIFCARGWLTTCGSKMLSNFVSPYDATVVERFDQAGMVNLGKTNMDEFAMGSSNETSYYGPVKNPWDRLAVPGGSSGGSACAVAARLAPAATGSDTGGSIRQPAALCGISGIKPTYGLVSRYGMIAFASSLDQGGPMAKSAEDLALLLNTMVGFDERDSTSLQRAEENYTQDLEKPVNGLRIGLPKEFFAEGMSSDVSNVIEAALAEYRKLGATFVEVSLPNSKLAVPVYYVLAPAEASSNLSRFDGVRYGYRTAQYSSLEDLYTKTRAEGFGEEVKRRILIGTYVLSHGYYDAYYLQAQKLRRLIAEDFRKAFEQCDLIMGPTTPTVAFNIGEKCDDPIQMYLSDIYTSTASLAGLPGMSIPAGFGSKNRPVGLHIIGNYFREAQMLNVAHRYQQVTNWHELTPPETSN.

Catalysis depends on charge relay system residues Lys-76 and Ser-151. Ser-175 (acyl-ester intermediate) is an active-site residue.

It belongs to the amidase family. GatA subfamily. As to quaternary structure, heterotrimer of A, B and C subunits.

It catalyses the reaction L-glutamyl-tRNA(Gln) + L-glutamine + ATP + H2O = L-glutaminyl-tRNA(Gln) + L-glutamate + ADP + phosphate + H(+). Functionally, allows the formation of correctly charged Gln-tRNA(Gln) through the transamidation of misacylated Glu-tRNA(Gln) in organisms which lack glutaminyl-tRNA synthetase. The reaction takes place in the presence of glutamine and ATP through an activated gamma-phospho-Glu-tRNA(Gln). The sequence is that of Glutamyl-tRNA(Gln) amidotransferase subunit A from Nitrosomonas europaea (strain ATCC 19718 / CIP 103999 / KCTC 2705 / NBRC 14298).